Reading from the N-terminus, the 515-residue chain is Sodium/hydrogen exchanger 9B1 (515 aa).

Over residues Met-1 to His-10 the composition is skewed to basic and acidic residues. Residues Met-1–Ala-32 form a disordered region. Residues Phe-16–Ala-32 are compositionally biased toward polar residues. Transmembrane regions (helical) follow at residues Val-66–Gly-86, Leu-95–Ile-115, Arg-116–Ile-136, Trp-152–Leu-172, Leu-187–Met-207, Phe-215–Val-235, Ile-260–Leu-280, Ile-284–Val-304, Ile-337–Lys-357, Ile-368–Val-388, Leu-407–Phe-427, Ile-431–Ala-451, and Val-472–Gly-492.

This sequence belongs to the monovalent cation:proton antiporter 1 (CPA1) transporter (TC 2.A.36) family. As to expression, expressed only in the testis.

The protein localises to the cell projection. Its subcellular location is the cilium. The protein resides in the flagellum membrane. In terms of biological role, sperm-specific Na(+)/H(+) exchanger involved in intracellular pH regulation of spermatozoa. Involved in sperm motility and fertility. The sequence is that of Sodium/hydrogen exchanger 9B1 from Homo sapiens (Human).